A 372-amino-acid chain; its full sequence is Queuine tRNA-ribosyltransferase (372 aa).

The Proton acceptor role is filled by Asp-90. Substrate is bound by residues 90–94 (DSGGF), Asp-144, Gln-193, and Gly-220. Residues 251–257 (GVGTPED) are RNA binding. The Nucleophile role is filled by Asp-270. Residues 275-279 (TRNAR) form an RNA binding; important for wobble base 34 recognition region. Positions 308, 310, 313, and 339 each coordinate Zn(2+).

Belongs to the queuine tRNA-ribosyltransferase family. In terms of assembly, homodimer. Within each dimer, one monomer is responsible for RNA recognition and catalysis, while the other monomer binds to the replacement base PreQ1. Zn(2+) serves as cofactor.

The enzyme catalyses 7-aminomethyl-7-carbaguanine + guanosine(34) in tRNA = 7-aminomethyl-7-carbaguanosine(34) in tRNA + guanine. It participates in tRNA modification; tRNA-queuosine biosynthesis. Catalyzes the base-exchange of a guanine (G) residue with the queuine precursor 7-aminomethyl-7-deazaguanine (PreQ1) at position 34 (anticodon wobble position) in tRNAs with GU(N) anticodons (tRNA-Asp, -Asn, -His and -Tyr). Catalysis occurs through a double-displacement mechanism. The nucleophile active site attacks the C1' of nucleotide 34 to detach the guanine base from the RNA, forming a covalent enzyme-RNA intermediate. The proton acceptor active site deprotonates the incoming PreQ1, allowing a nucleophilic attack on the C1' of the ribose to form the product. After dissociation, two additional enzymatic reactions on the tRNA convert PreQ1 to queuine (Q), resulting in the hypermodified nucleoside queuosine (7-(((4,5-cis-dihydroxy-2-cyclopenten-1-yl)amino)methyl)-7-deazaguanosine). The polypeptide is Queuine tRNA-ribosyltransferase (Campylobacter hominis (strain ATCC BAA-381 / DSM 21671 / CCUG 45161 / LMG 19568 / NCTC 13146 / CH001A)).